The chain runs to 402 residues: Formate-dependent phosphoribosylglycinamide formyltransferase (402 aa).

N(1)-(5-phospho-beta-D-ribosyl)glycinamide-binding positions include 23-24 and Glu-83; that span reads EL. ATP contacts are provided by residues Arg-116, Lys-157, 162 to 167, 197 to 200, and Glu-205; these read SSGKGQ and ESQI. An ATP-grasp domain is found at 121–316; it reads RLAAEELGLP…EFELHARAIL (196 aa). Mg(2+) contacts are provided by Glu-275 and Glu-287. N(1)-(5-phospho-beta-D-ribosyl)glycinamide-binding positions include Asp-294, Lys-363, and 370 to 371; that span reads RR.

The protein belongs to the PurK/PurT family. In terms of assembly, homodimer.

It catalyses the reaction N(1)-(5-phospho-beta-D-ribosyl)glycinamide + formate + ATP = N(2)-formyl-N(1)-(5-phospho-beta-D-ribosyl)glycinamide + ADP + phosphate + H(+). The protein operates within purine metabolism; IMP biosynthesis via de novo pathway; N(2)-formyl-N(1)-(5-phospho-D-ribosyl)glycinamide from N(1)-(5-phospho-D-ribosyl)glycinamide (formate route): step 1/1. Its function is as follows. Involved in the de novo purine biosynthesis. Catalyzes the transfer of formate to 5-phospho-ribosyl-glycinamide (GAR), producing 5-phospho-ribosyl-N-formylglycinamide (FGAR). Formate is provided by PurU via hydrolysis of 10-formyl-tetrahydrofolate. This is Formate-dependent phosphoribosylglycinamide formyltransferase from Acinetobacter baumannii (strain ATCC 17978 / DSM 105126 / CIP 53.77 / LMG 1025 / NCDC KC755 / 5377).